Reading from the N-terminus, the 203-residue chain is Holliday junction branch migration complex subunit RuvA (203 aa).

Residues 1–63 form a domain I region; that stretch reads MIGKLSGRVD…EDHINLYGFL (63 aa). Residues 64-142 form a domain II region; it reads SLEEKSFFNL…KISSSSAAIK (79 aa). Residues 143 to 149 form a flexible linker region; it reads DSLNIKG. The interval 150–203 is domain III; that stretch reads ITPVASSEVIKALINMGFSRFEAQNAVQEIITKNPEISIDELIRTALKNRNSNF.

Belongs to the RuvA family. As to quaternary structure, homotetramer. Forms an RuvA(8)-RuvB(12)-Holliday junction (HJ) complex. HJ DNA is sandwiched between 2 RuvA tetramers; dsDNA enters through RuvA and exits via RuvB. An RuvB hexamer assembles on each DNA strand where it exits the tetramer. Each RuvB hexamer is contacted by two RuvA subunits (via domain III) on 2 adjacent RuvB subunits; this complex drives branch migration. In the full resolvosome a probable DNA-RuvA(4)-RuvB(12)-RuvC(2) complex forms which resolves the HJ.

It localises to the cytoplasm. The RuvA-RuvB-RuvC complex processes Holliday junction (HJ) DNA during genetic recombination and DNA repair, while the RuvA-RuvB complex plays an important role in the rescue of blocked DNA replication forks via replication fork reversal (RFR). RuvA specifically binds to HJ cruciform DNA, conferring on it an open structure. The RuvB hexamer acts as an ATP-dependent pump, pulling dsDNA into and through the RuvAB complex. HJ branch migration allows RuvC to scan DNA until it finds its consensus sequence, where it cleaves and resolves the cruciform DNA. The polypeptide is Holliday junction branch migration complex subunit RuvA (Rickettsia bellii (strain OSU 85-389)).